The sequence spans 245 residues: Complement C1q subcomponent subunit C (245 aa).

Positions M1–A28 are cleaved as a signal peptide. One can recognise a Collagen-like domain in the interval G31–G112. 5 positions are modified to 4-hydroxyproline: P36, P39, P42, P45, and P63. A disordered region spans residues P42 to Q119. The residue at position 75 (K75) is a 5-hydroxylysine. O-linked (Gal...) hydroxylysine glycosylation occurs at K75. A 4-hydroxyproline mark is found at P81, P96, P99, and P105. The span at D98–E107 shows a compositional bias: pro residues. The C1q domain maps to K115–D245. C179 and C193 are disulfide-bonded.

Core component of the complement C1 complex, a calcium-dependent complex composed of 1 molecule of the C1Q subcomplex, 2 molecules of C1R and 2 molecules of C1S. The C1Q subcomplex is composed 18 subunits: 3 chains of C1QA, C1QB, and C1QC trimerize to form 6 collagen-like triple helices connected to six globular ligand-recognition modules (C1q domain). In terms of processing, O-linked glycans consist of Glc-Gal disaccharides bound to the oxygen atom of post-translationally added hydroxyl groups.

The protein resides in the secreted. It localises to the cell surface. The C1Q subcomplex is inhibited by sulfated molecules, such as triterpenoid sulfates, heparan sulfate, or chondroitin sulfates. In terms of biological role, core component of the complement C1 complex, a multiprotein complex that initiates the classical pathway of the complement system, a cascade of proteins that leads to phagocytosis and breakdown of pathogens and signaling that strengthens the adaptive immune system. The classical complement pathway is initiated by the C1Q subcomplex of the C1 complex, which specifically binds IgG or IgM immunoglobulins complexed with antigens, forming antigen-antibody complexes on the surface of pathogens: C1QA, together with C1QB and C1QC, specifically recognizes and binds the Fc regions of IgG or IgM via its C1q domain. Immunoglobulin-binding activates the proenzyme C1R, which cleaves C1S, initiating the proteolytic cascade of the complement system. The C1Q subcomplex is activated by a hexamer of IgG complexed with antigens, while it is activated by a pentameric IgM. The C1Q subcomplex also recognizes and binds phosphatidylserine exposed on the surface of cells undergoing programmed cell death, possibly promoting activation of the complement system. This is Complement C1q subcomponent subunit C from Rattus norvegicus (Rat).